The sequence spans 219 residues: 2-hydroxy-3-keto-5-methylthiopentenyl-1-phosphate phosphatase (219 aa).

The protein belongs to the HAD-like hydrolase superfamily. MtnX family.

It catalyses the reaction 2-hydroxy-5-methylsulfanyl-3-oxopent-1-enyl phosphate + H2O = 1,2-dihydroxy-5-(methylsulfanyl)pent-1-en-3-one + phosphate. It participates in amino-acid biosynthesis; L-methionine biosynthesis via salvage pathway; L-methionine from S-methyl-5-thio-alpha-D-ribose 1-phosphate: step 4/6. In terms of biological role, dephosphorylates 2-hydroxy-3-keto-5-methylthiopentenyl-1-phosphate (HK-MTPenyl-1-P) yielding 1,2-dihydroxy-3-keto-5-methylthiopentene (DHK-MTPene). This is 2-hydroxy-3-keto-5-methylthiopentenyl-1-phosphate phosphatase from Bacillus cytotoxicus (strain DSM 22905 / CIP 110041 / 391-98 / NVH 391-98).